The chain runs to 116 residues: S-adenosylmethionine decarboxylase proenzyme (116 aa).

The active-site Schiff-base intermediate with substrate; via pyruvic acid is the Ser-63. At Ser-63 the chain carries Pyruvic acid (Ser); by autocatalysis. The Proton acceptor; for processing activity role is filled by His-68. Cys-83 acts as the Proton donor; for catalytic activity in catalysis.

The protein belongs to the prokaryotic AdoMetDC family. Type 1 subfamily. As to quaternary structure, heterotetramer of two alpha and two beta chains arranged as a dimer of alpha/beta heterodimers. Pyruvate serves as cofactor. In terms of processing, is synthesized initially as an inactive proenzyme. Formation of the active enzyme involves a self-maturation process in which the active site pyruvoyl group is generated from an internal serine residue via an autocatalytic post-translational modification. Two non-identical subunits are generated from the proenzyme in this reaction, and the pyruvate is formed at the N-terminus of the alpha chain, which is derived from the carboxyl end of the proenzyme. The post-translation cleavage follows an unusual pathway, termed non-hydrolytic serinolysis, in which the side chain hydroxyl group of the serine supplies its oxygen atom to form the C-terminus of the beta chain, while the remainder of the serine residue undergoes an oxidative deamination to produce ammonia and the pyruvoyl group blocking the N-terminus of the alpha chain.

The catalysed reaction is S-adenosyl-L-methionine + H(+) = S-adenosyl 3-(methylsulfanyl)propylamine + CO2. It functions in the pathway amine and polyamine biosynthesis; S-adenosylmethioninamine biosynthesis; S-adenosylmethioninamine from S-adenosyl-L-methionine: step 1/1. Catalyzes the decarboxylation of S-adenosylmethionine to S-adenosylmethioninamine (dcAdoMet), the propylamine donor required for the synthesis of the polyamines spermine and spermidine from the diamine putrescine. In Clostridium botulinum (strain ATCC 19397 / Type A), this protein is S-adenosylmethionine decarboxylase proenzyme.